We begin with the raw amino-acid sequence, 144 residues long: Transcription antitermination protein NusB (144 aa).

The protein belongs to the NusB family.

Its function is as follows. Involved in transcription antitermination. Required for transcription of ribosomal RNA (rRNA) genes. Binds specifically to the boxA antiterminator sequence of the ribosomal RNA (rrn) operons. This is Transcription antitermination protein NusB from Streptococcus agalactiae serotype Ia (strain ATCC 27591 / A909 / CDC SS700).